Consider the following 497-residue polypeptide: Glutamyl-tRNA(Gln) amidotransferase subunit A (497 aa).

Residues Lys-91 and Ser-166 each act as charge relay system in the active site. The segment at 143-171 (SSTENSAYGPTHNPWDLERTAGGSGGGSS) is disordered. The Acyl-ester intermediate role is filled by Ser-190.

Belongs to the amidase family. GatA subfamily. As to quaternary structure, heterotrimer of A, B and C subunits.

It catalyses the reaction L-glutamyl-tRNA(Gln) + L-glutamine + ATP + H2O = L-glutaminyl-tRNA(Gln) + L-glutamate + ADP + phosphate + H(+). Functionally, allows the formation of correctly charged Gln-tRNA(Gln) through the transamidation of misacylated Glu-tRNA(Gln) in organisms which lack glutaminyl-tRNA synthetase. The reaction takes place in the presence of glutamine and ATP through an activated gamma-phospho-Glu-tRNA(Gln). The sequence is that of Glutamyl-tRNA(Gln) amidotransferase subunit A from Corynebacterium glutamicum (strain R).